Reading from the N-terminus, the 763-residue chain is MERGGGGGFGTGSRPEGTARGTCLPGKIAEPGAVRTSQPNYRPQGMEGFLKSGERQRLAKERREEREKCLAAREQQILEKQKRAKLQYEKQMEERWRKLEEQRQREDQKRAAVEEKRKQKLREEEERLEAMMRRSLERTQQLELKKKYSWGAPLAIGPGGHDGESENTPPPPLGLAASTLPPDAGTTAAAAESTNACDKLSTSTMSLPKPTEPPMSKRLSSSTVAISYSPDRAPLGPLNPSYKSSPTRNIEKKKATSTSTSGAGDVGKEALAGGEASLVEKVKRGQRTATSLPVVNFGSPLRRCEFSGGIPKRPSSPVISKTATKAYPQSPKTTKPPYPGSPVKYRLPALSGQDMPKRKAEKEKSNKEREGTLAQQAAGPQGEDALEKHVVDKHASEKHAAATGGKAENSAALGKPTAGTTDAGEAAKILAEKRRQARLQKEQEEQERLEKEEQDRLEREELKRKAEEERLRLEEEARKQEEERKRQEEEKKKQEEEEKREAGEEAKRKAEEELLLKEKQEQEKPEKEKQEKAMIEKQKEAAEAKAREVAEQMRLEREQIMLQIEQERLERKKRIDEIMKRTRKSDVSPQVKKEDPKMGVQPAVCVEKKTKLVVPNKMEINGLNTCQEINGVDHAAPETYPQDIFSNGLKPAGGLIHLDALDGKSNSLDDSTEEVQSMDVSPVSKEELISIPEFSPVSEMIPGVPLDQNGTGNARALQDLLDFTGPPTFPKRSSENLSLDDCNKNLIEGFNSPGQETPLNTFC.

The segment covering 1 to 11 (MERGGGGGFGT) has biased composition (gly residues). Disordered stretches follow at residues 1–63 (MERG…KERR), 96–124 (WRKL…LREE), 149–268 (SWGA…DVGK), and 300–540 (PLRR…KQKE). Positions 52–63 (SGERQRLAKERR) are enriched in basic and acidic residues. Residues 54 to 147 (ERQRLAKERR…RTQQLELKKK (94 aa)) adopt a coiled-coil conformation. Residues 192–206 (ESTNACDKLSTSTMS) show a composition bias toward polar residues. Composition is skewed to basic and acidic residues over residues 355 to 371 (MPKR…EREG), 385 to 400 (ALEK…EKHA), and 430 to 540 (LAEK…KQKE).

The protein belongs to the MAP7 family. As to quaternary structure, interacts (via N-terminus) with microtubules; facilitates microtubule stabilization. Interacts with kinesin-1 family members, KIF5A, KIF5B and KIF5C.

It localises to the cytoplasm. The protein resides in the cytoskeleton. Its subcellular location is the microtubule organizing center. The protein localises to the centrosome. It is found in the midbody. It localises to the cell projection. The protein resides in the neuron projection. Its subcellular location is the axon. Microtubule-stabilizing protein involved in the control of cell motility and neurite outgrowth. Acts as a critical cofactor for kinesin transport; in the proximal axon regulates kinesin-1 family members, KIF5A, KIF5B and KIF5C recruitment to microtubules and contributes to kinesin-1-mediated transport in the axons. This is MAP7 domain-containing protein 2 (MAP7D2) from Pongo abelii (Sumatran orangutan).